A 29-amino-acid chain; its full sequence is Lambda-theraphotoxin-Ec2c (29 aa).

3 disulfide bridges follow: Cys-2/Cys-16, Cys-9/Cys-21, and Cys-15/Cys-25.

The protein belongs to the neurotoxin 30 (phrixotoxin) family. In terms of tissue distribution, expressed by the venom gland.

The protein resides in the secreted. Both insecticidal and vertebrate neurotoxin that potently blocks insect calcium-activated potassium (BKCa) channels (Slo-type) in cockroach dorsal unpaired median (DUM) neurons (IC(50)=24.6 nM). This occurs in the absence of any shifts in the voltage dependence of activation. May interact with the turret and/or loop region of the external entrance to the channel and does not project deeply into the pore of the channel. Also shows toxicity to mice by introcerebroventicular injection. The sequence is that of Lambda-theraphotoxin-Ec2c from Eucratoscelus constrictus (African red-rump baboon spider).